Consider the following 118-residue polypeptide: MLEFAPICISLVISLLLSLILLVVPFLFSSNSSTYPEKLSAYECGFDPFGDARSRFDIRFYLVSILFIIFDLEVTFFFPWAVSFNKIDLFGFWSMMAFLLILTIGFLYEWKRGALDWE.

3 helical membrane-spanning segments follow: residues 7-27, 62-82, and 87-107; these read ICISLVISLLLSLILLVVPFL, LVSILFIIFDLEVTFFFPWAV, and IDLFGFWSMMAFLLILTIGFL.

It belongs to the complex I subunit 3 family.

Its subcellular location is the mitochondrion membrane. It carries out the reaction a ubiquinone + NADH + 5 H(+)(in) = a ubiquinol + NAD(+) + 4 H(+)(out). Its function is as follows. Core subunit of the mitochondrial membrane respiratory chain NADH dehydrogenase (Complex I) that is believed to belong to the minimal assembly required for catalysis. Complex I functions in the transfer of electrons from NADH to the respiratory chain. The immediate electron acceptor for the enzyme is believed to be ubiquinone. This Oenothera berteroana (Bertero's evening primrose) protein is NADH-ubiquinone oxidoreductase chain 3 (ND3).